The primary structure comprises 395 residues: LIM/homeobox protein Lhx3 (395 aa).

2 LIM zinc-binding domains span residues 28–78 (CAGC…CKED) and 87–141 (CAAC…CKAD). A DNA-binding region (homeobox) is located at residues 154–213 (AKRPRTTITAKQLETLKNAYNNSPKPARHVREQLSSETGLDMRVVQVWFQNRRAKEKRLK). Disordered stretches follow at residues 209–325 (EKRL…LQAL) and 348–395 (GGQG…HAQF). A compositionally biased stretch (polar residues) spans 257-276 (DEPSMSEMSHSNGIYSNLSE).

It localises to the nucleus. Its function is as follows. Transcription factor. Defines subclasses of motoneurons that segregate into columns in the spinal cord and select distinct axon pathways. Acts in conjunction with LIM-1, ISL-1 and ISL-2. This is LIM/homeobox protein Lhx3 (LHX3) from Gallus gallus (Chicken).